A 401-amino-acid polypeptide reads, in one-letter code: NADH-quinone oxidoreductase subunit D 2 (401 aa).

Belongs to the complex I 49 kDa subunit family. In terms of assembly, NDH-1 is composed of 14 different subunits. Subunits NuoB, C, D, E, F, and G constitute the peripheral sector of the complex.

The protein resides in the cell inner membrane. It carries out the reaction a quinone + NADH + 5 H(+)(in) = a quinol + NAD(+) + 4 H(+)(out). NDH-1 shuttles electrons from NADH, via FMN and iron-sulfur (Fe-S) centers, to quinones in the respiratory chain. The immediate electron acceptor for the enzyme in this species is believed to be ubiquinone. Couples the redox reaction to proton translocation (for every two electrons transferred, four hydrogen ions are translocated across the cytoplasmic membrane), and thus conserves the redox energy in a proton gradient. This is NADH-quinone oxidoreductase subunit D 2 from Thermodesulfovibrio yellowstonii (strain ATCC 51303 / DSM 11347 / YP87).